Reading from the N-terminus, the 103-residue chain is Large ribosomal subunit protein bL21 (103 aa).

Belongs to the bacterial ribosomal protein bL21 family. In terms of assembly, part of the 50S ribosomal subunit. Contacts protein L20.

In terms of biological role, this protein binds to 23S rRNA in the presence of protein L20. This is Large ribosomal subunit protein bL21 from Nautilia profundicola (strain ATCC BAA-1463 / DSM 18972 / AmH).